We begin with the raw amino-acid sequence, 483 residues long: Probable cytosol aminopeptidase (483 aa).

The Mn(2+) site is built by Lys252 and Asp257. Lys264 is an active-site residue. 3 residues coordinate Mn(2+): Asp275, Asp334, and Glu336. Arg338 is an active-site residue.

This sequence belongs to the peptidase M17 family. Mn(2+) is required as a cofactor.

The protein localises to the cytoplasm. It catalyses the reaction Release of an N-terminal amino acid, Xaa-|-Yaa-, in which Xaa is preferably Leu, but may be other amino acids including Pro although not Arg or Lys, and Yaa may be Pro. Amino acid amides and methyl esters are also readily hydrolyzed, but rates on arylamides are exceedingly low.. The enzyme catalyses Release of an N-terminal amino acid, preferentially leucine, but not glutamic or aspartic acids.. Its function is as follows. Presumably involved in the processing and regular turnover of intracellular proteins. Catalyzes the removal of unsubstituted N-terminal amino acids from various peptides. The polypeptide is Probable cytosol aminopeptidase (Legionella pneumophila (strain Paris)).